We begin with the raw amino-acid sequence, 250 residues long: ATP synthase subunit a (250 aa).

Transmembrane regions (helical) follow at residues 29–49 (ASLFMAASAAIAAGFLYFATS), 84–104 (FFPLVFSLFMFVLTANLLGMF), 114–134 (IIVTAALAILVIGTVVVYGFY), 143–163 (VFVPSGVPGILLPLVVTIEII), 193–213 (FVASLGALGAVGVGGAVLPLI), and 216–236 (VALTGLEFLVAFLQAYVFAVL).

Belongs to the ATPase A chain family. In terms of assembly, F-type ATPases have 2 components, CF(1) - the catalytic core - and CF(0) - the membrane proton channel. CF(1) has five subunits: alpha(3), beta(3), gamma(1), delta(1), epsilon(1). CF(0) has three main subunits: a(1), b(2) and c(9-12). The alpha and beta chains form an alternating ring which encloses part of the gamma chain. CF(1) is attached to CF(0) by a central stalk formed by the gamma and epsilon chains, while a peripheral stalk is formed by the delta and b chains.

Its subcellular location is the cell inner membrane. In terms of biological role, key component of the proton channel; it plays a direct role in the translocation of protons across the membrane. In Rhizobium johnstonii (strain DSM 114642 / LMG 32736 / 3841) (Rhizobium leguminosarum bv. viciae), this protein is ATP synthase subunit a.